A 494-amino-acid polypeptide reads, in one-letter code: Alpha-amylase-related protein (494 aa).

The signal sequence occupies residues 1–20 (MIKFALALTLCLAGASLSLA). Gln-21 bears the Pyrrolidone carboxylic acid mark. Residues Cys-48 and Cys-104 are joined by a disulfide bond. Asn-118, Gln-169, and Asp-178 together coordinate Ca(2+). A disulfide bridge links Cys-157 with Cys-171. Arg-206 contributes to the chloride binding site. Catalysis depends on Asp-208, which acts as the Nucleophile. His-212 contributes to the Ca(2+) binding site. The Proton donor role is filled by Glu-245. The chloride site is built by Asn-308 and Arg-343. Cystine bridges form between Cys-376-Cys-382, Cys-418-Cys-441, and Cys-448-Cys-460.

Belongs to the glycosyl hydrolase 13 family. Monomer. Ca(2+) serves as cofactor. Requires chloride as cofactor.

The protein localises to the secreted. It catalyses the reaction Endohydrolysis of (1-&gt;4)-alpha-D-glucosidic linkages in polysaccharides containing three or more (1-&gt;4)-alpha-linked D-glucose units.. This Drosophila serrata (Fruit fly) protein is Alpha-amylase-related protein (Amyrel).